Here is a 698-residue protein sequence, read N- to C-terminus: MTHTISGQYGRDTIVLETGSWAKQAHGAVVYKSGNLVLLATVCAADEAKEGQDFFPLTCEYTEKLYSVGRFPGGYFKREAKPPEHEILISRIIDRPIRPLFPEGYFCEVQLQVQVLSADGDVSVAGHALNAASAALAVSDIPFNGPIAGARIGRVNGELILNPTTKEILNSDLDLVVAGTKTHIVMIEGEAKELSNEEMIAALRFAQKHIAEFVTLQEEYAKKIGVVKREVKLKVRDEELLSKVKEYAFAKLTTANQTPDKTARNKEISNVNKEVVEFFKDTIEDSDKIKDIKAYLHELEYEIVREQVLTKGTRFDGRKLDEIRSISVEINPLPGPHGSAVFTRGQTQSLGVVTLGTGSDNQRYETLEGQKEKSFMLHYNFPAFSVGEVRRSSGPGRREIGHGNLAERALKLVLPKPDEFPYVIRVVSEILESNGSSSMASVCSGSLALMAAGVPIQGSVSGIAMGLFSDSSGKYAVLSDIAGLEDHFGDMDCKIAGTRKGITAFQMDLKVTGVSFDVLESVFEQAQRGRFHILDIMEKHISKASSTLAGTAPRIIVRNIPKDRIGELIGPGGKNVRGISELTGAELYIEDDGKVTISGSNQESAEKAAKMVDGFFAEVEVGKIYEGKVKRIADFGAFVEILPGKEGLCHISKIDFKRVNSVKDIVKEGDIIRVKVLNVDKTGKIDLSRKDALEEEQV.

Mg(2+)-binding residues include D486 and D492. One can recognise a KH domain in the interval 553–612 (PRIIVRNIPKDRIGELIGPGGKNVRGISELTGAELYIEDDGKVTISGSNQESAEKAAKMV). Residues 622–690 (GKIYEGKVKR…KTGKIDLSRK (69 aa)) form the S1 motif domain.

The protein belongs to the polyribonucleotide nucleotidyltransferase family. It depends on Mg(2+) as a cofactor.

It is found in the cytoplasm. The enzyme catalyses RNA(n+1) + phosphate = RNA(n) + a ribonucleoside 5'-diphosphate. Involved in mRNA degradation. Catalyzes the phosphorolysis of single-stranded polyribonucleotides processively in the 3'- to 5'-direction. In Leptospira interrogans serogroup Icterohaemorrhagiae serovar copenhageni (strain Fiocruz L1-130), this protein is Polyribonucleotide nucleotidyltransferase.